The sequence spans 238 residues: Ribosomal RNA small subunit methyltransferase G (238 aa).

S-adenosyl-L-methionine-binding positions include Gly77, Phe82, 128–129 (AE), and Arg147. Residues 219–238 (KETPNKYPRKPGTPNKLPIE) form a disordered region.

It belongs to the methyltransferase superfamily. RNA methyltransferase RsmG family.

The protein resides in the cytoplasm. Its function is as follows. Specifically methylates the N7 position of guanine in position 535 of 16S rRNA. This is Ribosomal RNA small subunit methyltransferase G from Listeria monocytogenes serovar 1/2a (strain ATCC BAA-679 / EGD-e).